We begin with the raw amino-acid sequence, 80 residues long: Translation initiation factor IF-1 (80 aa).

The S1-like domain occupies 6 to 80 (RKQEHEKERG…LTRGRIVYRL (75 aa)).

This sequence belongs to the IF-1 family. In terms of assembly, component of the 30S ribosomal translation pre-initiation complex which assembles on the 30S ribosome in the order IF-2 and IF-3, IF-1 and N-formylmethionyl-tRNA(fMet); mRNA recruitment can occur at any time during PIC assembly.

It localises to the cytoplasm. Its function is as follows. One of the essential components for the initiation of protein synthesis. Stabilizes the binding of IF-2 and IF-3 on the 30S subunit to which N-formylmethionyl-tRNA(fMet) subsequently binds. Helps modulate mRNA selection, yielding the 30S pre-initiation complex (PIC). Upon addition of the 50S ribosomal subunit IF-1, IF-2 and IF-3 are released leaving the mature 70S translation initiation complex. The protein is Translation initiation factor IF-1 of Aquifex aeolicus (strain VF5).